A 124-amino-acid polypeptide reads, in one-letter code: Large ribosomal subunit protein eL31 (124 aa).

Y102 carries the phosphotyrosine modification.

The protein belongs to the eukaryotic ribosomal protein eL31 family.

The sequence is that of Large ribosomal subunit protein eL31 (RpL31) from Drosophila melanogaster (Fruit fly).